The following is a 377-amino-acid chain: Citrate synthase (377 aa).

Catalysis depends on residues H220, H259, and D313.

It belongs to the citrate synthase family. As to quaternary structure, homodimer.

The catalysed reaction is oxaloacetate + acetyl-CoA + H2O = citrate + CoA + H(+). Its pathway is carbohydrate metabolism; tricarboxylic acid cycle; isocitrate from oxaloacetate: step 1/2. Might regulate the synthesis and function of enzymes involved in later enzymatic steps of Krebs cycle. Loss in activity results in sporulation defect. The protein is Citrate synthase (gltA) of Deinococcus radiodurans (strain ATCC 13939 / DSM 20539 / JCM 16871 / CCUG 27074 / LMG 4051 / NBRC 15346 / NCIMB 9279 / VKM B-1422 / R1).